Consider the following 201-residue polypeptide: Lipopolysaccharide core heptose(II)-phosphate phosphatase (201 aa).

The N-terminal stretch at 1 to 35 is a signal peptide; the sequence is MLAFTLRFIKNKRYLATLAGALVIIAGLTSQHAWS.

This sequence belongs to the phosphoglycerate mutase family. Ais subfamily.

It is found in the periplasm. It participates in bacterial outer membrane biogenesis; lipopolysaccharide metabolism. Functionally, catalyzes the dephosphorylation of heptose(II) of the outer membrane lipopolysaccharide core. This Salmonella paratyphi A (strain AKU_12601) protein is Lipopolysaccharide core heptose(II)-phosphate phosphatase.